A 421-amino-acid polypeptide reads, in one-letter code: D-aspartate ligase (421 aa).

Residues 130–332 (YEVCEEYDLP…LARFVTEDRV (203 aa)) form the ATP-grasp domain. ATP is bound at residue 161–224 (PFEFPVALKP…QDFIPGDDSN (64 aa)). Mg(2+)-binding residues include Asp290, Glu304, and Asn306.

Requires Mg(2+) as cofactor.

It carries out the reaction [beta-GlcNAc-(1-&gt;4)-Mur2Ac(oyl-L-Ala-gamma-D-Glu-L-Lys-D-Ala-D-Ala)](n) + n D-aspartate + n ATP = [beta-GlcNAc-(1-&gt;4)-Mur2Ac(oyl-L-Ala-gamma-D-Glu-6-N-(beta-D-Asp)-L-Lys-D-Ala-D-Ala)]n + n ADP + n phosphate + n H(+). It participates in cell wall biogenesis; peptidoglycan biosynthesis. Catalyzes the addition of D-aspartate onto the lysine residue in the peptidoglycan precursor UDP-MurNAc-pentapeptide. The ligation occurs between the beta-carboxylate of D-Asp and the epsilon-amino group of L-Lys. Is highly specific for D-aspartate, as L-aspartate, D-glutamate, D-alanine, D-iso-asparagine and D-malate are not substrates. The sequence is that of D-aspartate ligase from Enterococcus faecium (strain Aus0004).